The chain runs to 111 residues: MANPKVHVRKGDLVQVITGKDAGKKGKIIEVIPAKNRVVVEKVNIVKRHSKPSKTNPQGGIIEKEAPIDASNVMIFCPKCDRPVRSGHKFLENGDKARICRKCGDVLDKDK.

It belongs to the universal ribosomal protein uL24 family. In terms of assembly, part of the 50S ribosomal subunit.

Functionally, one of two assembly initiator proteins, it binds directly to the 5'-end of the 23S rRNA, where it nucleates assembly of the 50S subunit. Its function is as follows. One of the proteins that surrounds the polypeptide exit tunnel on the outside of the subunit. The protein is Large ribosomal subunit protein uL24 of Heliobacterium modesticaldum (strain ATCC 51547 / Ice1).